We begin with the raw amino-acid sequence, 257 residues long: Cytochrome c oxidase subunit 3 (257 aa).

6 helical membrane passes run 15–35 (PWPL…VKWF), 82–102 (GMIL…WGFF), 124–144 (FLSA…VTWA), 156–176 (CLQG…LQGL), 194–214 (FFLA…FLMI), and 235–255 (AWYW…IYWW).

This sequence belongs to the cytochrome c oxidase subunit 3 family. Component of the cytochrome c oxidase (complex IV, CIV), a multisubunit enzyme composed of a catalytic core of 3 subunits and several supernumerary subunits. The complex exists as a monomer or a dimer and forms supercomplexes (SCs) in the inner mitochondrial membrane with ubiquinol-cytochrome c oxidoreductase (cytochrome b-c1 complex, complex III, CIII).

The protein resides in the mitochondrion inner membrane. It carries out the reaction 4 Fe(II)-[cytochrome c] + O2 + 8 H(+)(in) = 4 Fe(III)-[cytochrome c] + 2 H2O + 4 H(+)(out). Its function is as follows. Component of the cytochrome c oxidase, the last enzyme in the mitochondrial electron transport chain which drives oxidative phosphorylation. The respiratory chain contains 3 multisubunit complexes succinate dehydrogenase (complex II, CII), ubiquinol-cytochrome c oxidoreductase (cytochrome b-c1 complex, complex III, CIII) and cytochrome c oxidase (complex IV, CIV), that cooperate to transfer electrons derived from NADH and succinate to molecular oxygen, creating an electrochemical gradient over the inner membrane that drives transmembrane transport and the ATP synthase. Cytochrome c oxidase is the component of the respiratory chain that catalyzes the reduction of oxygen to water. Electrons originating from reduced cytochrome c in the intermembrane space (IMS) are transferred via the dinuclear copper A center (CU(A)) of subunit 2 and heme A of subunit 1 to the active site in subunit 1, a binuclear center (BNC) formed by heme A3 and copper B (CU(B)). The BNC reduces molecular oxygen to 2 water molecules using 4 electrons from cytochrome c in the IMS and 4 protons from the mitochondrial matrix. This Artemia franciscana (Brine shrimp) protein is Cytochrome c oxidase subunit 3 (COIII).